Reading from the N-terminus, the 583-residue chain is Isocitrate dehydrogenase kinase/phosphatase (583 aa).

Residues alanine 315 to methionine 321 and lysine 336 contribute to the ATP site. Residue aspartate 371 is part of the active site.

Belongs to the AceK family.

It localises to the cytoplasm. It carries out the reaction L-seryl-[isocitrate dehydrogenase] + ATP = O-phospho-L-seryl-[isocitrate dehydrogenase] + ADP + H(+). Its function is as follows. Bifunctional enzyme which can phosphorylate or dephosphorylate isocitrate dehydrogenase (IDH) on a specific serine residue. This is a regulatory mechanism which enables bacteria to bypass the Krebs cycle via the glyoxylate shunt in response to the source of carbon. When bacteria are grown on glucose, IDH is fully active and unphosphorylated, but when grown on acetate or ethanol, the activity of IDH declines drastically concomitant with its phosphorylation. The protein is Isocitrate dehydrogenase kinase/phosphatase of Salmonella dublin (strain CT_02021853).